Reading from the N-terminus, the 141-residue chain is Hemoglobin subunit alpha-A (141 aa).

The 141-residue stretch at 1–141 (VLSASDKSNV…VGTVLTAKYR (141 aa)) folds into the Globin domain. H58 contacts O2. H87 lines the heme b pocket.

It belongs to the globin family. As to quaternary structure, heterotetramer of two alpha chains and two beta chains. In terms of tissue distribution, red blood cells.

Involved in oxygen transport from the lung to the various peripheral tissues. The sequence is that of Hemoglobin subunit alpha-A (HBAA) from Streptopelia orientalis (Eastern turtle dove).